A 129-amino-acid chain; its full sequence is Small ribosomal subunit protein bS6 (129 aa).

The segment at 103-129 (LKQKEERAERAPRREERAEAKPEAAAE) is disordered. Residues 104–129 (KQKEERAERAPRREERAEAKPEAAAE) show a composition bias toward basic and acidic residues.

This sequence belongs to the bacterial ribosomal protein bS6 family.

Binds together with bS18 to 16S ribosomal RNA. This chain is Small ribosomal subunit protein bS6, found in Vibrio campbellii (strain ATCC BAA-1116).